Consider the following 250-residue polypeptide: Beta-crystallin B1 (250 aa).

A disordered region spans residues 1 to 47 (MSQVAKAAATTAVNPGPDGKGKGTPSTGTAPAPGPTPVPASVPRPAA). Position 2 is an N-acetylserine (S2). The tract at residues 2-56 (SQVAKAAATTAVNPGPDGKGKGTPSTGTAPAPGPTPVPASVPRPAAKVGELPPGS) is N-terminal arm. Over residues 32–42 (APGPTPVPASV) the composition is skewed to pro residues. Beta/gamma crystallin 'Greek key' domains lie at 57-96 (YRLV…IVLS) and 97-141 (GPWV…RPIR). The connecting peptide stretch occupies residues 142–146 (MDSQE). Beta/gamma crystallin 'Greek key' domains are found at residues 147-188 (HKIC…TVSS) and 189-231 (GTWV…RRLR). The segment at 233 to 250 (RQWHQEGCFPVLTAEPPK) is C-terminal arm.

Belongs to the beta/gamma-crystallin family. Homo/heterodimer, or complexes of higher-order. The structure of beta-crystallin oligomers seems to be stabilized through interactions between the N-terminal arms. Specific cleavages in the N-terminal arm occur during lens maturation and give rise to truncated forms, leading to impaired oligomerization and protein insolubilization. The protease responsible for this partial degradation could be calpain II.

Crystallins are the dominant structural components of the vertebrate eye lens. The chain is Beta-crystallin B1 (Crybb1) from Rattus norvegicus (Rat).